A 270-amino-acid chain; its full sequence is Putative pyruvate, phosphate dikinase regulatory protein 2 (270 aa).

151–158 (GVSRTSKT) provides a ligand contact to ADP.

This sequence belongs to the pyruvate, phosphate/water dikinase regulatory protein family. PDRP subfamily.

It catalyses the reaction N(tele)-phospho-L-histidyl/L-threonyl-[pyruvate, phosphate dikinase] + ADP = N(tele)-phospho-L-histidyl/O-phospho-L-threonyl-[pyruvate, phosphate dikinase] + AMP + H(+). The enzyme catalyses N(tele)-phospho-L-histidyl/O-phospho-L-threonyl-[pyruvate, phosphate dikinase] + phosphate + H(+) = N(tele)-phospho-L-histidyl/L-threonyl-[pyruvate, phosphate dikinase] + diphosphate. In terms of biological role, bifunctional serine/threonine kinase and phosphorylase involved in the regulation of the pyruvate, phosphate dikinase (PPDK) by catalyzing its phosphorylation/dephosphorylation. The chain is Putative pyruvate, phosphate dikinase regulatory protein 2 from Listeria monocytogenes serotype 4b (strain F2365).